The sequence spans 152 residues: MFP1 attachment factor 1 (152 aa).

Disordered stretches follow at residues Met-1 to Gln-33 and Asp-107 to Pro-152. The WPP stretch occupies residues Thr-12–Pro-115. Residues Glu-134–Pro-152 are compositionally biased toward polar residues.

Interacts with WAP through its WPP domain. Binds to MFP1 and FPP proteins. As to expression, expressed in young tomato leaves, young fruits, and flowers (at protein level).

The protein resides in the nucleus envelope. It localises to the cytoplasm. The protein localises to the golgi apparatus. Its subcellular location is the nucleus. It is found in the nucleus matrix. The sequence is that of MFP1 attachment factor 1 (MAF1) from Solanum lycopersicum (Tomato).